A 142-amino-acid polypeptide reads, in one-letter code: Probable transport accessory protein MmpS1 (142 aa).

Helical transmembrane passes span 8-28 (FWIPMVIVIVVAVAAVTVSRL) and 81-101 (VVNAAVPWSFTIVTTLTAVVA).

This sequence belongs to the MmpS family.

It localises to the cell membrane. The sequence is that of Probable transport accessory protein MmpS1 (mmpS1) from Mycobacterium bovis (strain ATCC BAA-935 / AF2122/97).